The primary structure comprises 119 residues: Phytosulfokines 2 (119 aa).

An N-terminal signal peptide occupies residues 1–34 (MSTTRGVSSSSAAAALALLLLFALCFFSFHFAAA). A propeptide spanning residues 35–109 (ARAVPRDEHQ…RRLLSDAHLD (75 aa)) is cleaved from the precursor. Sulfotyrosine is present on residues Tyr-110 and Tyr-112. Positions 115–119 (HKNKP) are excised as a propeptide.

This sequence belongs to the phytosulfokine family. In terms of processing, sulfation is important for activity and for the binding to a putative membrane receptor. Post-translationally, PSK-alpha is produced by endopeptidase digestion. PSK-beta is produced from PSK-alpha by exopeptidase digestion.

It is found in the secreted. Promotes plant cell differentiation, organogenesis and somatic embryogenesis as well as cell proliferation. This is Phytosulfokines 2 (PSK2) from Oryza sativa subsp. japonica (Rice).